The following is a 616-amino-acid chain: Adenylosuccinate synthetase 2 (616 aa).

The segment at 1–26 (MDKQAERDQSAGPVKTPQETQPPAHN) is disordered. A compositionally biased stretch (polar residues) spans 17 to 26 (PQETQPPAHN). GTP contacts are provided by residues 87–93 (GDEGKGK) and 117–119 (GHT). Catalysis depends on aspartate 88, which acts as the Proton acceptor. Mg(2+) is bound by residues aspartate 88 and glycine 117. Residues 88–91 (DEGK), 115–118 (NAGH), threonine 202, lysine 216, glutamine 328, threonine 343, and lysine 472 each bind IMP. The active-site Proton donor is the histidine 118. A substrate-binding site is contributed by 468-474 (AVTKKPR). Residues arginine 474 and 603-605 (GNG) each bind GTP.

The protein belongs to the adenylosuccinate synthetase family. In terms of assembly, homodimer. The cofactor is Mg(2+).

It is found in the cytoplasm. The catalysed reaction is IMP + L-aspartate + GTP = N(6)-(1,2-dicarboxyethyl)-AMP + GDP + phosphate + 2 H(+). It functions in the pathway purine metabolism; AMP biosynthesis via de novo pathway; AMP from IMP: step 1/2. In terms of biological role, plays an important role in the salvage pathway for purine nucleotide biosynthesis. Catalyzes the first committed step in the biosynthesis of AMP from IMP. The chain is Adenylosuccinate synthetase 2 from Trypanosoma cruzi (strain CL Brener).